A 279-amino-acid polypeptide reads, in one-letter code: Coiled-coil domain-containing protein 106 (279 aa).

Residues 62–101 (KAQLHMALERNSWLQKRIEDLEEERDFLRCQLDKFISSAR) adopt a coiled-coil conformation. Residues 109–121 (RMKPGPRRVDGDS) show a composition bias toward basic and acidic residues. Positions 109 to 173 (RMKPGPRRVD…FGKTKARERQ (65 aa)) are disordered. S129 carries the post-translational modification Phosphoserine. A Bipartite nuclear localization signal motif is present at residues 151-164 (KRQKQKGSTSRKRF). Basic residues predominate over residues 151 to 167 (KRQKQKGSTSRKRFGKT).

As to quaternary structure, interacts with p53/TP53.

It localises to the nucleus. Promotes the degradation of p53/TP53 protein and inhibits its transactivity. This chain is Coiled-coil domain-containing protein 106 (Ccdc106), found in Mus musculus (Mouse).